Here is a 395-residue protein sequence, read N- to C-terminus: Indoleacetate--lysine synthetase (395 aa).

The protein belongs to the ATP-dependent AMP-binding enzyme family.

It carries out the reaction (indol-3-yl)acetate + L-lysine + ATP = N(6)-[(indole-3-yl)acetyl]-L-lysine + ADP + phosphate + H(+). In terms of biological role, conversion of IAA to IAA-lysine. This Pseudomonas savastanoi (Pseudomonas syringae pv. savastanoi) protein is Indoleacetate--lysine synthetase (iaaL).